A 419-amino-acid polypeptide reads, in one-letter code: L-rhamnose isomerase (419 aa).

Residues His262, Asp294, and Asp296 each coordinate Mn(2+).

The protein belongs to the rhamnose isomerase family. Homotetramer. Mn(2+) serves as cofactor.

The protein resides in the cytoplasm. It catalyses the reaction L-rhamnopyranose = L-rhamnulose. It participates in carbohydrate degradation; L-rhamnose degradation; glycerone phosphate from L-rhamnose: step 1/3. In terms of biological role, catalyzes the interconversion of L-rhamnose and L-rhamnulose. This Shigella flexneri serotype 5b (strain 8401) protein is L-rhamnose isomerase.